A 1010-amino-acid chain; its full sequence is Sodium/potassium-transporting ATPase subunit alpha-3 (1010 aa).

Residues 1–21 (MGDKDDRFPKKKKGGTKDMDA) form a disordered region. At 1–74 (MGDKDDRFPK…NALTPPPTTP (74 aa)) the chain is on the cytoplasmic side. Residues 69–71 (PPP) are interaction with phosphoinositide-3 kinase. A helical membrane pass occupies residues 75-95 (EWVKFCRQLFGGFSILLWTGA). Topologically, residues 96–118 (ILCFLAYAIQAATEDEPAGDNLY) are extracellular. Residues 119-139 (LGIVLTAVVVITGCFSYFQEA) form a helical membrane-spanning segment. The Cytoplasmic segment spans residues 140 to 275 (KSSKIMESFK…TGKTPIAVEI (136 aa)). A compositionally biased stretch (polar residues) spans 201-216 (DNSSLTGESEPQSRSP). A disordered region spans residues 201 to 221 (DNSSLTGESEPQSRSPDCTHD). Residues 276-295 (EHFIHIITGVAVFLGVTFFI) traverse the membrane as a helical segment. Over 296-307 (LAIILGYTWLKA) the chain is Extracellular. The helical transmembrane segment at 308-325 (VIFLIGIIVANVPEGLLA) threads the bilayer. The Cytoplasmic segment spans residues 326–759 (TVTVCLTLTA…EEGRLIFDNL (434 aa)). The active-site 4-aspartylphosphate intermediate is aspartate 363. Positions 704 and 708 each coordinate Mg(2+). The helical transmembrane segment at 760 to 779 (KKSIAYTLTSNIPEITPFLF) threads the bilayer. Topologically, residues 780–789 (FIIVNIPLAL) are extracellular. The chain crosses the membrane as a helical span at residues 790–810 (GTITILCIDLGTDMGSAISLA). Topologically, residues 811-830 (YETAESDIMKRQPRNPCRDK) are cytoplasmic. The helical transmembrane segment at 831–853 (LVNERLISIAYGQIGMIQALGGF) threads the bilayer. Topologically, residues 854 to 905 (FSYFVILAENGFLPSQLVGIRLNWDDRSLNDLEDSYGQQWTYEQRKIVEFTC) are extracellular. Residues 906-925 (HTAFFVSIVVVQWADLIICK) traverse the membrane as a helical segment. The Cytoplasmic portion of the chain corresponds to 926-938 (TRRNSVFQQGMKN). Residue serine 930 is modified to Phosphoserine; by PKA. A helical membrane pass occupies residues 939–957 (KILIFGLFEETALAAFLSY). Over 958–972 (CPGMDVALRMYPLKP) the chain is Extracellular. Residues 973–993 (TWWFWAFPYSFLIFVYDEARK) traverse the membrane as a helical segment. The Cytoplasmic portion of the chain corresponds to 994–1010 (LILCRNPGGWVEKETYY).

It belongs to the cation transport ATPase (P-type) (TC 3.A.3) family. Type IIC subfamily. In terms of assembly, the sodium/potassium-transporting ATPase is composed of a catalytic alpha subunit, an auxiliary non-catalytic beta subunit and an additional regulatory subunit.

Its subcellular location is the cell membrane. The enzyme catalyses K(+)(out) + Na(+)(in) + ATP + H2O = K(+)(in) + Na(+)(out) + ADP + phosphate + H(+). Its function is as follows. This is the catalytic component of the active enzyme, which catalyzes the hydrolysis of ATP coupled with the exchange of sodium and potassium ions across the plasma membrane. This action creates the electrochemical gradient of sodium and potassium ions, providing the energy for active transport of various nutrients. This is Sodium/potassium-transporting ATPase subunit alpha-3 (atp1a3) from Oreochromis mossambicus (Mozambique tilapia).